The sequence spans 277 residues: N-acetylmuramic acid 6-phosphate etherase (277 aa).

In terms of domain architecture, SIS spans 53-216 (IIPRVKKGGR…STTIMIELGR (164 aa)). Glu-81 (proton donor) is an active-site residue. The active site involves Glu-112.

Belongs to the GCKR-like family. MurNAc-6-P etherase subfamily. In terms of assembly, homodimer.

The catalysed reaction is N-acetyl-D-muramate 6-phosphate + H2O = N-acetyl-D-glucosamine 6-phosphate + (R)-lactate. Its pathway is amino-sugar metabolism; N-acetylmuramate degradation. Its function is as follows. Specifically catalyzes the cleavage of the D-lactyl ether substituent of MurNAc 6-phosphate, producing GlcNAc 6-phosphate and D-lactate. The sequence is that of N-acetylmuramic acid 6-phosphate etherase from Bacteroides thetaiotaomicron (strain ATCC 29148 / DSM 2079 / JCM 5827 / CCUG 10774 / NCTC 10582 / VPI-5482 / E50).